Consider the following 150-residue polypeptide: MSGKILDKMAGLLGLEDDLEEDLEEVEEETVEEEVTPLISSNTKRNNKVVSIHTAVSAKVKIIKPCSYEEAVDICDELKNRKIIIVNTTDLETKIAQRLLDFMGGASYALGGSLEEVEKSVYILAPSTVEVTNELKSQLISSKGIFNWNK.

Belongs to the SepF family. As to quaternary structure, homodimer. Interacts with FtsZ.

It localises to the cytoplasm. In terms of biological role, cell division protein that is part of the divisome complex and is recruited early to the Z-ring. Probably stimulates Z-ring formation, perhaps through the cross-linking of FtsZ protofilaments. Its function overlaps with FtsA. This chain is Cell division protein SepF, found in Clostridium botulinum (strain Kyoto / Type A2).